Reading from the N-terminus, the 377-residue chain is Early estrogen-induced gene 1 protein (377 aa).

Positions 2 to 145 constitute a C2 NT-type domain; it reads AFLTKKKKFK…ILKVNIGMSL (144 aa). 3 stretches are compositionally biased toward polar residues: residues 160 to 173, 188 to 198, and 222 to 234; these read KTVSPPGQDSSLQM, VRQNRSRQAML, and SRNSSQASQQSKI. The tract at residues 160 to 313 is disordered; it reads KTVSPPGQDS…SVESQPTWVD (154 aa). Low complexity predominate over residues 256–269; the sequence is TSTSSSVSGGLSLT. A compositionally biased stretch (basic and acidic residues) spans 274 to 285; the sequence is EPERDVKPEKPP.

Belongs to the EEIG family.

Its subcellular location is the nucleus. The protein localises to the cytoplasm. Functionally, may be involved in osteoclast differentiation. This is Early estrogen-induced gene 1 protein (eeig1) from Xenopus laevis (African clawed frog).